The sequence spans 264 residues: Proliferating cell nuclear antigen (264 aa).

A DNA-binding region spans residues 61–80 (RCDRNISMGMNLGNMAKMLK).

This sequence belongs to the PCNA family.

It localises to the nucleus. Functionally, this protein is an auxiliary protein of DNA polymerase delta and is involved in the control of eukaryotic DNA replication by increasing the polymerase's processibility during elongation of the leading strand. This is Proliferating cell nuclear antigen from Daucus carota (Wild carrot).